The following is a 389-amino-acid chain: Adenylyltransferase and sulfurtransferase uba4 (389 aa).

Residues glycine 40, aspartate 61, 68 to 72 (SNLHR), lysine 85, and 129 to 130 (DT) contribute to the ATP site. The Zn(2+) site is built by cysteine 171 and cysteine 174. The active-site Glycyl thioester intermediate; for adenylyltransferase activity is cysteine 188. 2 residues coordinate Zn(2+): cysteine 252 and cysteine 255. One can recognise a Rhodanese domain in the interval 298 to 387 (AQRAPYLVDV…WSRQIDPNFP (90 aa)). Catalysis depends on cysteine 347, which acts as the Cysteine persulfide intermediate.

In the N-terminal section; belongs to the HesA/MoeB/ThiF family. UBA4 subfamily. Zn(2+) serves as cofactor.

Its subcellular location is the cytoplasm. It is found in the cytosol. It carries out the reaction [molybdopterin-synthase sulfur-carrier protein]-C-terminal Gly-Gly + ATP + H(+) = [molybdopterin-synthase sulfur-carrier protein]-C-terminal Gly-Gly-AMP + diphosphate. The enzyme catalyses [molybdopterin-synthase sulfur-carrier protein]-C-terminal Gly-Gly-AMP + S-sulfanyl-L-cysteinyl-[cysteine desulfurase] + AH2 = [molybdopterin-synthase sulfur-carrier protein]-C-terminal-Gly-aminoethanethioate + L-cysteinyl-[cysteine desulfurase] + A + AMP + 2 H(+). Its pathway is tRNA modification; 5-methoxycarbonylmethyl-2-thiouridine-tRNA biosynthesis. It participates in cofactor biosynthesis; molybdopterin biosynthesis. Plays a central role in 2-thiolation of mcm(5)S(2)U at tRNA wobble positions of cytosolic tRNA(Lys), tRNA(Glu) and tRNA(Gln). Also essential during biosynthesis of the molybdenum cofactor. Acts by mediating the C-terminal thiocarboxylation of sulfur carriers URM1 and CNX5/MOCS2A. Its N-terminus first activates urm1 and mocs2a as acyl-adenylates (-COAMP), then the persulfide sulfur on the catalytic cysteine is transferred to URM1 and CNX5/MOCS2A to form thiocarboxylation (-COSH) of their C-terminus. The reaction probably involves hydrogen sulfide that is generated from the persulfide intermediate and that acts as a nucleophile towards URM1 and CNX5/MOCS2A. Subsequently, a transient disulfide bond is formed. Does not use thiosulfate as sulfur donor; NFS1 probably acting as a sulfur donor for thiocarboxylation reactions. Required for growth on nitrate as a sole nitrogen source. This chain is Adenylyltransferase and sulfurtransferase uba4, found in Ogataea parapolymorpha (strain ATCC 26012 / BCRC 20466 / JCM 22074 / NRRL Y-7560 / DL-1) (Yeast).